Consider the following 394-residue polypeptide: Envelope glycoprotein D (394 aa).

The first 25 residues, methionine 1–glycine 25, serve as a signal peptide directing secretion. The segment at glycine 25–proline 57 is interaction with TNFRSF14. Residues lysine 26–asparagine 339 are Virion surface-facing. Residue histidine 64 coordinates Zn(2+). 3 disulfides stabilise this stretch: cysteine 91–cysteine 214, cysteine 131–cysteine 227, and cysteine 143–cysteine 152. 2 N-linked (GlcNAc...) asparagine; by host glycosylation sites follow: asparagine 119 and asparagine 146. Aspartate 240 is a Zn(2+) binding site. The profusion stretch occupies residues leucine 261–glutamate 305. The disordered stretch occupies residues serine 275–serine 301. N-linked (GlcNAc...) asparagine; by host glycosylation occurs at asparagine 287. Residues methionine 340 to methionine 364 traverse the membrane as a helical segment. Residues arginine 365 to tyrosine 394 lie on the Intravirion side of the membrane. Residues arginine 374–tyrosine 394 form a disordered region.

This sequence belongs to the herpesviridae glycoprotein D family. As to quaternary structure, homodimer. Interacts with host receptor TNFRSF14. Interacts with host receptor NECTIN1. Interacts (via profusion domain) with gB; this interaction occurs in the absence of gH/gL. Interacts (via profusion domain) with gH/gL heterodimer; this interaction occurs in the absence of gB. Associates with the gB-gH/gL-gD complex. Interacts (via C-terminus) with UL11 tegument protein. Interacts with host RSAD2.

It localises to the virion membrane. The protein resides in the host Golgi apparatus. Envelope glycoprotein that binds to the host cell entry receptors NECTIN1, TNFRSF14/HVEM and 3-O-sulfated heparan sulfate, promoting the virus entry into host cells. May trigger fusion with host membrane, by recruiting the fusion machinery composed of gB and gH/gL. In Homo sapiens (Human), this protein is Envelope glycoprotein D (gD).